We begin with the raw amino-acid sequence, 231 residues long: 5'-methylthioadenosine/S-adenosylhomocysteine nucleosidase (231 aa).

Glu12 acts as the Proton acceptor in catalysis. Substrate-binding positions include Gly78, Met153, and Met174–Glu175. Residue Asp198 is the Proton donor of the active site.

This sequence belongs to the PNP/UDP phosphorylase family. MtnN subfamily.

It carries out the reaction S-adenosyl-L-homocysteine + H2O = S-(5-deoxy-D-ribos-5-yl)-L-homocysteine + adenine. The enzyme catalyses S-methyl-5'-thioadenosine + H2O = 5-(methylsulfanyl)-D-ribose + adenine. The catalysed reaction is 5'-deoxyadenosine + H2O = 5-deoxy-D-ribose + adenine. It participates in amino-acid biosynthesis; L-methionine biosynthesis via salvage pathway; S-methyl-5-thio-alpha-D-ribose 1-phosphate from S-methyl-5'-thioadenosine (hydrolase route): step 1/2. Functionally, catalyzes the irreversible cleavage of the glycosidic bond in both 5'-methylthioadenosine (MTA) and S-adenosylhomocysteine (SAH/AdoHcy) to adenine and the corresponding thioribose, 5'-methylthioribose and S-ribosylhomocysteine, respectively. Also cleaves 5'-deoxyadenosine, a toxic by-product of radical S-adenosylmethionine (SAM) enzymes, into 5-deoxyribose and adenine. This is 5'-methylthioadenosine/S-adenosylhomocysteine nucleosidase from Bacillus licheniformis (strain ATCC 14580 / DSM 13 / JCM 2505 / CCUG 7422 / NBRC 12200 / NCIMB 9375 / NCTC 10341 / NRRL NRS-1264 / Gibson 46).